A 365-amino-acid chain; its full sequence is Homeobox protein knotted-1-like 7 (365 aa).

Positions Met1–Gly11 are enriched in basic and acidic residues. Residues Met1–Leu20 are disordered. The ELK domain occupies Ala227–Leu247. The homeobox; TALE-type DNA-binding region spans Ser248–Thr311.

Belongs to the TALE/KNOX homeobox family.

The protein localises to the nucleus. Probable transcription factor that may be involved in shoot formation during embryogenesis. The sequence is that of Homeobox protein knotted-1-like 7 (OSH3) from Oryza sativa subsp. japonica (Rice).